Here is a 32-residue protein sequence, read N- to C-terminus: Cytochrome b6-f complex subunit 7 (32 aa).

A helical transmembrane segment spans residues 5-25 (IFGTAAIFWVLIPIGLVGGAL).

Belongs to the PetM family. As to quaternary structure, the 4 large subunits of the cytochrome b6-f complex are cytochrome b6, subunit IV (17 kDa polypeptide, PetD), cytochrome f and the Rieske protein, while the 4 small subunits are PetG, PetL, PetM and PetN. The complex functions as a dimer.

It is found in the cellular thylakoid membrane. Component of the cytochrome b6-f complex, which mediates electron transfer between photosystem II (PSII) and photosystem I (PSI), cyclic electron flow around PSI, and state transitions. This is Cytochrome b6-f complex subunit 7 from Synechococcus sp. (strain CC9902).